The chain runs to 425 residues: Light-independent protochlorophyllide reductase subunit N (425 aa).

Positions 17, 42, and 103 each coordinate [4Fe-4S] cluster.

The protein belongs to the BchN/ChlN family. Protochlorophyllide reductase is composed of three subunits; ChlL, ChlN and ChlB. Forms a heterotetramer of two ChlB and two ChlN subunits. It depends on [4Fe-4S] cluster as a cofactor.

It carries out the reaction chlorophyllide a + oxidized 2[4Fe-4S]-[ferredoxin] + 2 ADP + 2 phosphate = protochlorophyllide a + reduced 2[4Fe-4S]-[ferredoxin] + 2 ATP + 2 H2O. The protein operates within porphyrin-containing compound metabolism; chlorophyll biosynthesis (light-independent). In terms of biological role, component of the dark-operative protochlorophyllide reductase (DPOR) that uses Mg-ATP and reduced ferredoxin to reduce ring D of protochlorophyllide (Pchlide) to form chlorophyllide a (Chlide). This reaction is light-independent. The NB-protein (ChlN-ChlB) is the catalytic component of the complex. The sequence is that of Light-independent protochlorophyllide reductase subunit N from Synechococcus sp. (strain CC9605).